We begin with the raw amino-acid sequence, 273 residues long: Dermonecrotic toxin LapSicTox-alphaIB1bi (273 aa).

Residue His5 is part of the active site. 2 residues coordinate Mg(2+): Glu25 and Asp27. His41 serves as the catalytic Nucleophile. 2 cysteine pairs are disulfide-bonded: Cys45–Cys51 and Cys47–Cys190. Asp85 provides a ligand contact to Mg(2+). N-linked (GlcNAc...) asparagine glycans are attached at residues Asn189 and Asn250.

The protein belongs to the arthropod phospholipase D family. Class II subfamily. Mg(2+) is required as a cofactor. As to expression, expressed by the venom gland.

The protein localises to the secreted. It carries out the reaction an N-(acyl)-sphingosylphosphocholine = an N-(acyl)-sphingosyl-1,3-cyclic phosphate + choline. It catalyses the reaction an N-(acyl)-sphingosylphosphoethanolamine = an N-(acyl)-sphingosyl-1,3-cyclic phosphate + ethanolamine. The enzyme catalyses a 1-acyl-sn-glycero-3-phosphocholine = a 1-acyl-sn-glycero-2,3-cyclic phosphate + choline. The catalysed reaction is a 1-acyl-sn-glycero-3-phosphoethanolamine = a 1-acyl-sn-glycero-2,3-cyclic phosphate + ethanolamine. Its function is as follows. Dermonecrotic toxins cleave the phosphodiester linkage between the phosphate and headgroup of certain phospholipids (sphingolipid and lysolipid substrates), forming an alcohol (often choline) and a cyclic phosphate. This toxin acts on sphingomyelin (SM). It may also act on ceramide phosphoethanolamine (CPE), lysophosphatidylcholine (LPC) and lysophosphatidylethanolamine (LPE), but not on lysophosphatidylserine (LPS), and lysophosphatidylglycerol (LPG). It acts by transphosphatidylation, releasing exclusively cyclic phosphate products as second products. Induces dermonecrosis, hemolysis, increased vascular permeability, edema, inflammatory response, and platelet aggregation. The polypeptide is Dermonecrotic toxin LapSicTox-alphaIB1bi (Loxosceles apachea (Apache recluse spider)).